A 396-amino-acid polypeptide reads, in one-letter code: NADH-quinone oxidoreductase subunit D (396 aa).

Belongs to the complex I 49 kDa subunit family. As to quaternary structure, NDH-1 is composed of 14 different subunits. Subunits NuoB, C, D, E, F, and G constitute the peripheral sector of the complex.

Its subcellular location is the cell inner membrane. The catalysed reaction is a quinone + NADH + 5 H(+)(in) = a quinol + NAD(+) + 4 H(+)(out). In terms of biological role, NDH-1 shuttles electrons from NADH, via FMN and iron-sulfur (Fe-S) centers, to quinones in the respiratory chain. The immediate electron acceptor for the enzyme in this species is believed to be ubiquinone. Couples the redox reaction to proton translocation (for every two electrons transferred, four hydrogen ions are translocated across the cytoplasmic membrane), and thus conserves the redox energy in a proton gradient. The sequence is that of NADH-quinone oxidoreductase subunit D from Brucella canis (strain ATCC 23365 / NCTC 10854 / RM-666).